The chain runs to 202 residues: uncharacterized protein (202 aa).

Its subcellular location is the mitochondrion. This is an uncharacterized protein from Schizosaccharomyces pombe (strain 972 / ATCC 24843) (Fission yeast).